Here is a 756-residue protein sequence, read N- to C-terminus: Xylosyl- and glucuronyltransferase LARGE1 (756 aa).

Over 1 to 10 (MLGICRGRRK) the chain is Cytoplasmic. The chain crosses the membrane as a helical; Signal-anchor for type II membrane protein span at residues 11-31 (FLAASLTVLFVPAVTWIYLFA). The Lumenal portion of the chain corresponds to 32 to 756 (GSFEDGKPVS…LKYLTAENNS (725 aa)). 2 disordered regions span residues 42-63 (LSPLESQPHSPRYTASSQRDRE) and 81-109 (KQLSLAQGRSPSHHRGNHSKTYSMEEGTG). Polar residues predominate over residues 44–58 (PLESQPHSPRYTASS). Residues 55–90 (TASSQRDRESLEVRMREVEEENRVLRKQLSLAQGRS) are a coiled coil. Residues Asn97, Asn122, and Asn148 are each glycosylated (N-linked (GlcNAc...) asparagine). Residues 138 to 413 (IHVAIVCAGY…FLEYDGNLLR (276 aa)) are xylosyltransferase activity. Residues Asp242 and Asp244 each contribute to the Mn(2+) site. N-linked (GlcNAc...) asparagine glycosylation is present at Asn272. The glucuronyltransferase activity stretch occupies residues 414-756 (RELFGCPSEA…LKYLTAENNS (343 aa)). Asp563 and Asp565 together coordinate Mn(2+).

In the C-terminal section; belongs to the glycosyltransferase 49 family. It in the N-terminal section; belongs to the glycosyltransferase 8 family. It depends on Mn(2+) as a cofactor.

It localises to the golgi apparatus membrane. It catalyses the reaction 3-O-[beta-D-GlcA-(1-&gt;3)-beta-D-Xyl-(1-&gt;4)-Rib-ol-P-Rib-ol-P-3-beta-D-GalNAc-(1-&gt;3)-beta-D-GlcNAc-(1-&gt;4)-(O-6-P-alpha-D-Man)]-Thr-[protein] + UDP-alpha-D-xylose = 3-O-[alpha-D-Xyl-(1-&gt;3)-beta-D-GlcA-(1-&gt;4)-beta-D-Xyl-(1-&gt;4)-Rib-ol-P-Rib-ol-P-3-beta-D-GalNAc-(1-&gt;3)-beta-D-GlcNAc-(1-&gt;4)-(O-6-P-alpha-D-Man)]-Thr-[protein] + UDP + H(+). It carries out the reaction 3-O-{(1-&gt;[3)-alpha-D-Xyl-(1-&gt;3)-beta-D-GlcA-(1-&gt;](n)-4)-beta-D-Xyl-(1-&gt;4)-Rib-ol-P-Rib-ol-P-3-beta-D-GalNAc-(1-&gt;3)-beta-D-GlcNAc-(1-&gt;4)-O-6-P-alpha-D-Man}-L-Thr-[protein] + UDP-alpha-D-glucuronate = 3-O-{beta-D-GlcA-(1-&gt;[3)-alpha-D-Xyl-(1-&gt;3)-beta-D-GlcA-(1-&gt;](n)-4)-beta-D-Xyl-(1-&gt;4)-Rib-ol-P-Rib-ol-P-3-beta-D-GalNAc-(1-&gt;3)-beta-D-GlcNAc-(1-&gt;4)-O-6-P-alpha-D-Man}-L-Thr-[protein] + UDP + H(+). The catalysed reaction is 3-O-{beta-D-GlcA-(1-&gt;[3)-alpha-D-Xyl-(1-&gt;3)-beta-D-GlcA-(1-&gt;](n)-4)-beta-D-Xyl-(1-&gt;4)-Rib-ol-P-Rib-ol-P-3-beta-D-GalNAc-(1-&gt;3)-beta-D-GlcNAc-(1-&gt;4)-O-6-P-alpha-D-Man}-L-Thr-[protein] + UDP-alpha-D-xylose = 3-O-{(1-&gt;[3)-alpha-D-Xyl-(1-&gt;3)-beta-D-GlcA-(1-&gt;](n+1)-4)-beta-D-Xyl-(1-&gt;4)-Rib-ol-P-Rib-ol-P-3-beta-D-GalNAc-(1-&gt;3)-beta-D-GlcNAc-(1-&gt;4)-O-6-P-alpha-D-Man}-L-Thr-[protein] + UDP + H(+). Its pathway is protein modification; protein glycosylation. In terms of biological role, bifunctional glycosyltransferase with both alpha-1,3-xylosyltransferase and beta-1,3-glucuronyltransferase activities involved in the maturation of alpha-dystroglycan (DAG1) by glycosylation leading to DAG1 binding to laminin G-like domain-containing extracellular proteins with high affinity. Elongates the glucuronyl-beta-1,4-xylose-beta disaccharide primer structure initiated by B4GAT1 by adding repeating units [-3-Xylose-alpha-1,3-GlcA-beta-1-] to produce a heteropolysaccharide. Requires the phosphorylation of core M3 (O-mannosyl trisaccharide) by POMK to elongate the glucuronyl-beta-1,4-xylose-beta disaccharide primer. Plays a key role in skeletal muscle function and regeneration. This Gallus gallus (Chicken) protein is Xylosyl- and glucuronyltransferase LARGE1.